We begin with the raw amino-acid sequence, 252 residues long: Vacuolar-sorting protein dot2 (252 aa).

This sequence belongs to the SNF8 family. In terms of assembly, component of the endosomal sorting complex required for transport II (ESCRT-II).

Its subcellular location is the cytoplasm. It localises to the nucleus. The protein resides in the endosome membrane. Its function is as follows. Component of the endosomal sorting complex required for transport II (ESCRT-II), which is required for multivesicular body (MVB) formation and sorting of endosomal cargo proteins into MVBs. The MVB pathway mediates delivery of transmembrane proteins into the lumen of the lysosome for degradation. The ESCRT-II complex is probably involved in the recruitment of the ESCRT-III complex. Negatively regulates meiotic spindle pole body maturation via indirect regulation of the pcp1 gene. Required for efficient entry into pre-meiotic S phase. The chain is Vacuolar-sorting protein dot2 (dot2) from Schizosaccharomyces pombe (strain 972 / ATCC 24843) (Fission yeast).